Reading from the N-terminus, the 463-residue chain is tRNA (guanine(37)-N(1))-methyltransferase (463 aa).

Residues histidine 207, 245–246 (DL), 274–275 (DG), and asparagine 305 each bind S-adenosyl-L-methionine.

The protein belongs to the class I-like SAM-binding methyltransferase superfamily. TRM5/TYW2 family. Monomer.

The protein resides in the mitochondrion matrix. It localises to the nucleus. The protein localises to the cytoplasm. It catalyses the reaction guanosine(37) in tRNA + S-adenosyl-L-methionine = N(1)-methylguanosine(37) in tRNA + S-adenosyl-L-homocysteine + H(+). Specifically methylates the N1 position of guanosine-37 in various cytoplasmic and mitochondrial tRNAs. Methylation is not dependent on the nature of the nucleoside 5' of the target nucleoside. This is the first step in the biosynthesis of wybutosine (yW), a modified base adjacent to the anticodon of tRNAs and required for accurate decoding. The protein is tRNA (guanine(37)-N(1))-methyltransferase of Pediculus humanus subsp. corporis (Body louse).